Here is a 336-residue protein sequence, read N- to C-terminus: Ethanol acetyltransferase 1 (336 aa).

The N-terminal 14 residues, 1–14 (MFPTRVLRSTLQKL), are a transit peptide targeting the mitochondrion. The region spanning 44–296 (PIVFLHGIFG…VNSSHDILDQ (253 aa)) is the AB hydrolase-1 domain. Active-site charge relay system residues include serine 117, aspartate 141, and histidine 291.

The protein belongs to the AB hydrolase superfamily.

It localises to the mitochondrion. The catalysed reaction is ethanol + acetyl-CoA = ethyl acetate + CoA. It catalyses the reaction acetyl-CoA + H2O = acetate + CoA + H(+). It carries out the reaction ethyl acetate + H2O = ethanol + acetate + H(+). In terms of biological role, alcohol acetyltransferase that catalyzes the synthesis of ethyl acetate from ethanol and acetyl-CoA. Can also function as a thioesterase by hydrolyzing acetyl-CoA in the absence of ethanol, as well as esterase hydrolyzing ethyl acetate. The protein is Ethanol acetyltransferase 1 (EAT1) of Cyberlindnera jadinii (strain ATCC 18201 / CBS 1600 / BCRC 20928 / JCM 3617 / NBRC 0987 / NRRL Y-1542) (Torula yeast).